A 379-amino-acid polypeptide reads, in one-letter code: Succinyl-diaminopimelate desuccinylase (379 aa).

H70 provides a ligand contact to Zn(2+). D72 is a catalytic residue. D103 is a Zn(2+) binding site. E137 functions as the Proton acceptor in the catalytic mechanism. Residues E138, E166, and H352 each coordinate Zn(2+).

Belongs to the peptidase M20A family. DapE subfamily. As to quaternary structure, homodimer. Requires Zn(2+) as cofactor. It depends on Co(2+) as a cofactor.

It carries out the reaction N-succinyl-(2S,6S)-2,6-diaminopimelate + H2O = (2S,6S)-2,6-diaminopimelate + succinate. Its pathway is amino-acid biosynthesis; L-lysine biosynthesis via DAP pathway; LL-2,6-diaminopimelate from (S)-tetrahydrodipicolinate (succinylase route): step 3/3. Catalyzes the hydrolysis of N-succinyl-L,L-diaminopimelic acid (SDAP), forming succinate and LL-2,6-diaminopimelate (DAP), an intermediate involved in the bacterial biosynthesis of lysine and meso-diaminopimelic acid, an essential component of bacterial cell walls. This Burkholderia lata (strain ATCC 17760 / DSM 23089 / LMG 22485 / NCIMB 9086 / R18194 / 383) protein is Succinyl-diaminopimelate desuccinylase.